We begin with the raw amino-acid sequence, 727 residues long: MTSNDPADPADRAEFDDAAVAGMTSEAEAGATAEGVEDVPAGVRERYADLVEQVRAHQFRYYVLDSPTISDGEFDELFTELQTLESDHPALRDPDSPTQVVGGTFSTDFTAVDHLERMLSLDNAFDPDELRAWVERVEREVGSSAHYLCELKIDGLAINLLYRDGKLERALTRGDGRTGEDVTLNVRTMDDVPDQLTGTDEYPVPALVEIRGEVFFRVDEFAQLNASLVEAGKPPFANPRNSAAGSLRQKDPRVTKSRPLRMICHGLGKREGFEPKQQSESYAALRAWGLRVSPHTKVLSTVDEVLEHIDYWGKHRNSAEHEIDGVVVKVDEVSLQRRLGATSRAPRWSIAYKYPPEQATTRLLDIQVAVGRTGRVTPYAVMEPVKVAGSTVARATLHNADQVRHKGVLIGDRVVIRKAGDVIPEVLGPVVDVRDGSEREFVMPTECPDCGTALAHQKEGDVDLRCPNSHNCIGQRRERLFQLAGRKAFDIEVLGYEGVSALLSAGVVFDEGDLFDLNEEALLKTTLFRTDDGSLSVNGGKLLANLESAKQQPLWRVLVALSIRHVGPIAARVLAREFGSLDRIQEASEEELAAGEGVGPTIATAVREWFDVDWHREIVRKWSEAGVRMADERDESIERHLTGLSIVVTGSLEGFSRDEAKELIMARGGRAAGSVSKKTAFVVVGESPGSKYDKAVQMKVPVLDEDGFRVLLEQGPEAAAEAALPAE.

Residues 71 to 75, 120 to 121, and Glu-150 contribute to the NAD(+) site; these read DGEFD and SL. Lys-152 functions as the N6-AMP-lysine intermediate in the catalytic mechanism. NAD(+) is bound by residues Arg-173, Glu-213, Lys-329, and Lys-353. Zn(2+) contacts are provided by Cys-447, Cys-450, Cys-466, and Cys-472. Positions 636 to 725 constitute a BRCT domain; it reads SIERHLTGLS…PEAAAEAALP (90 aa).

It belongs to the NAD-dependent DNA ligase family. LigA subfamily. Mg(2+) serves as cofactor. The cofactor is Mn(2+).

The enzyme catalyses NAD(+) + (deoxyribonucleotide)n-3'-hydroxyl + 5'-phospho-(deoxyribonucleotide)m = (deoxyribonucleotide)n+m + AMP + beta-nicotinamide D-nucleotide.. Its function is as follows. DNA ligase that catalyzes the formation of phosphodiester linkages between 5'-phosphoryl and 3'-hydroxyl groups in double-stranded DNA using NAD as a coenzyme and as the energy source for the reaction. It is essential for DNA replication and repair of damaged DNA. In Saccharopolyspora erythraea (strain ATCC 11635 / DSM 40517 / JCM 4748 / NBRC 13426 / NCIMB 8594 / NRRL 2338), this protein is DNA ligase.